The sequence spans 338 residues: Outer membrane transporter protein TsaT (338 aa).

The signal sequence occupies residues methionine 1 to alanine 22.

Part of a two-component transport system composed of TsaT and TsaS.

The protein localises to the cell outer membrane. In terms of biological role, involved in the uptake of p-toluenesulphonate (TSA). Forms a large, general diffusion pore with a preference for anions. This is Outer membrane transporter protein TsaT (tsaT) from Comamonas testosteroni (Pseudomonas testosteroni).